The sequence spans 203 residues: MKLRWFAFLIVLLAGCSSKHDYTNPPWNAKVPVQRAMQWMPISQKAGAAWGVDPQLITAIIAIESGGNPNAVSKSNAIGLMQLKASTSGRDVYRRMGWSGEPTTSELKNPERNISMGAAYLNILETGPLAGIEDPKVLQYALVVSYANGAGALLRTFSSDRKKAISKINDLDADEFLEHVARNHPAPQAPRYIYKLEQALDAM.

A signal peptide spans 1–15; it reads MKLRWFAFLIVLLAG. Cys-16 carries N-palmitoyl cysteine lipidation. Cys-16 is lipidated: S-diacylglycerol cysteine.

Belongs to the transglycosylase Slt family.

Its subcellular location is the cell outer membrane. The catalysed reaction is Endolytic cleavage of the (1-&gt;4)-beta-glycosidic linkage between N-acetylmuramic acid (MurNAc) and N-acetylglucosamine (GlcNAc) residues in peptidoglycan with concomitant formation of a 1,6-anhydrobond in the MurNAc residue.. In terms of biological role, murein-degrading enzyme. May play a role in recycling of muropeptides during cell elongation and/or cell division. Preferentially cleaves at a distance of more than two disaccharide units from the ends of the glycan chain. This Escherichia coli (strain K12 / MC4100 / BW2952) protein is Endo-type membrane-bound lytic murein transglycosylase A.